The sequence spans 85 residues: uncharacterized protein (85 aa).

The N-terminal stretch at 1–20 (MIKLFCVLAAFISINSACQS) is a signal peptide.

This is an uncharacterized protein from Invertebrate iridescent virus 6 (IIV-6).